The sequence spans 156 residues: Small ribosomal subunit protein uS7A/uS7B (156 aa).

This sequence belongs to the universal ribosomal protein uS7 family. As to quaternary structure, part of the 30S ribosomal subunit. Contacts proteins S9 and S11.

In terms of biological role, one of the primary rRNA binding proteins, it binds directly to 16S rRNA where it nucleates assembly of the head domain of the 30S subunit. Is located at the subunit interface close to the decoding center, probably blocks exit of the E-site tRNA. This is Small ribosomal subunit protein uS7A/uS7B from Bartonella bacilliformis (strain ATCC 35685 / KC583 / Herrer 020/F12,63).